Consider the following 265-residue polypeptide: Cytochrome c oxidase subunit 3 (265 aa).

The next 6 helical transmembrane spans lie at Pro-16–Met-36, Gly-41–Trp-61, Tyr-84–Ser-104, Ala-162–Met-182, Phe-200–Val-220, and Ala-242–Trp-262.

The protein belongs to the cytochrome c oxidase subunit 3 family. Component of the cytochrome c oxidase (complex IV, CIV), a multisubunit enzyme composed of a catalytic core of 3 subunits and several supernumerary subunits. The complex exists as a monomer or a dimer and forms supercomplexes (SCs) in the inner mitochondrial membrane with ubiquinol-cytochrome c oxidoreductase (cytochrome b-c1 complex, complex III, CIII).

The protein localises to the mitochondrion inner membrane. It carries out the reaction 4 Fe(II)-[cytochrome c] + O2 + 8 H(+)(in) = 4 Fe(III)-[cytochrome c] + 2 H2O + 4 H(+)(out). Component of the cytochrome c oxidase, the last enzyme in the mitochondrial electron transport chain which drives oxidative phosphorylation. The respiratory chain contains 3 multisubunit complexes succinate dehydrogenase (complex II, CII), ubiquinol-cytochrome c oxidoreductase (cytochrome b-c1 complex, complex III, CIII) and cytochrome c oxidase (complex IV, CIV), that cooperate to transfer electrons derived from NADH and succinate to molecular oxygen, creating an electrochemical gradient over the inner membrane that drives transmembrane transport and the ATP synthase. Cytochrome c oxidase is the component of the respiratory chain that catalyzes the reduction of oxygen to water. Electrons originating from reduced cytochrome c in the intermembrane space (IMS) are transferred via the dinuclear copper A center (CU(A)) of subunit 2 and heme A of subunit 1 to the active site in subunit 1, a binuclear center (BNC) formed by heme A3 and copper B (CU(B)). The BNC reduces molecular oxygen to 2 water molecules using 4 electrons from cytochrome c in the IMS and 4 protons from the mitochondrial matrix. This is Cytochrome c oxidase subunit 3 (COX3) from Zea mays (Maize).